We begin with the raw amino-acid sequence, 99 residues long: Large ribosomal subunit protein bL21 (99 aa).

The protein belongs to the bacterial ribosomal protein bL21 family. As to quaternary structure, part of the 50S ribosomal subunit. Contacts protein L20.

Its function is as follows. This protein binds to 23S rRNA in the presence of protein L20. The sequence is that of Large ribosomal subunit protein bL21 from Anaplasma phagocytophilum (strain HZ).